The primary structure comprises 286 residues: ATP synthase gamma chain (286 aa).

Belongs to the ATPase gamma chain family. As to quaternary structure, F-type ATPases have 2 components, CF(1) - the catalytic core - and CF(0) - the membrane proton channel. CF(1) has five subunits: alpha(3), beta(3), gamma(1), delta(1), epsilon(1). CF(0) has three main subunits: a, b and c.

The protein localises to the cell membrane. Functionally, produces ATP from ADP in the presence of a proton gradient across the membrane. The gamma chain is believed to be important in regulating ATPase activity and the flow of protons through the CF(0) complex. The protein is ATP synthase gamma chain of Oceanobacillus iheyensis (strain DSM 14371 / CIP 107618 / JCM 11309 / KCTC 3954 / HTE831).